Consider the following 347-residue polypeptide: Bifunctional methylenetetrahydrofolate dehydrogenase/cyclohydrolase 2, mitochondrial (347 aa).

Substrate-binding positions include 98 to 102 (YVRNK) and 145 to 147 (VQL). NAD(+) is bound by residues 214–216 (GRS) and Arg-247. Position 323 to 327 (323 to 327 (PGGVG)) interacts with substrate.

It belongs to the tetrahydrofolate dehydrogenase/cyclohydrolase family. Mg(2+) serves as cofactor.

The protein resides in the mitochondrion inner membrane. The enzyme catalyses (6R)-5,10-methylene-5,6,7,8-tetrahydrofolate + NAD(+) = (6R)-5,10-methenyltetrahydrofolate + NADH. The catalysed reaction is (6R)-5,10-methenyltetrahydrofolate + H2O = (6R)-10-formyltetrahydrofolate + H(+). It carries out the reaction (6R)-5,10-methylene-5,6,7,8-tetrahydrofolate + NADP(+) = (6R)-5,10-methenyltetrahydrofolate + NADPH. It functions in the pathway one-carbon metabolism; tetrahydrofolate interconversion. In terms of biological role, bifunctional mitochondrial folate-interconverting enzyme that has both NAD/NADP-dependent methylenetetrahydrofolate dehydrogenase and methenyltetrahydrofolate cyclohydrolase activities. This chain is Bifunctional methylenetetrahydrofolate dehydrogenase/cyclohydrolase 2, mitochondrial, found in Callithrix jacchus (White-tufted-ear marmoset).